The following is a 246-amino-acid chain: Proteasome subunit alpha type-5 (246 aa).

Belongs to the peptidase T1A family. As to quaternary structure, the 26S proteasome consists of a 20S proteasome core and two 19S regulatory subunits. The 20S proteasome core is composed of 28 subunits that are arranged in four stacked rings, resulting in a barrel-shaped structure. The two end rings are each formed by seven alpha subunits, and the two central rings are each formed by seven beta subunits. The catalytic chamber with the active sites is on the inside of the barrel.

Its subcellular location is the cytoplasm. It is found in the nucleus. Its function is as follows. The proteasome is a multicatalytic proteinase complex which is characterized by its ability to cleave peptides with Arg, Phe, Tyr, Leu, and Glu adjacent to the leaving group at neutral or slightly basic pH. The proteasome has an ATP-dependent proteolytic activity. The chain is Proteasome subunit alpha type-5 from Trypanosoma brucei brucei.